Here is an 801-residue protein sequence, read N- to C-terminus: Leucine--tRNA ligase (801 aa).

The 'HIGH' region motif lies at 40–51; the sequence is PYPSGAGLHVGH. The 'KMSKS' region motif lies at 576 to 580; that stretch reads KMSKS. Lys-579 contacts ATP.

Belongs to the class-I aminoacyl-tRNA synthetase family.

The protein localises to the cytoplasm. The enzyme catalyses tRNA(Leu) + L-leucine + ATP = L-leucyl-tRNA(Leu) + AMP + diphosphate. This chain is Leucine--tRNA ligase, found in Exiguobacterium sibiricum (strain DSM 17290 / CCUG 55495 / CIP 109462 / JCM 13490 / 255-15).